The following is a 248-amino-acid chain: Triosephosphate isomerase (248 aa).

Substrate is bound by residues asparagine 10 and lysine 12. Residue histidine 95 is the Electrophile of the active site. The active-site Proton acceptor is glutamate 165.

This sequence belongs to the triosephosphate isomerase family. As to quaternary structure, homodimer.

The catalysed reaction is D-glyceraldehyde 3-phosphate = dihydroxyacetone phosphate. It functions in the pathway carbohydrate biosynthesis; gluconeogenesis. Its pathway is carbohydrate degradation; glycolysis; D-glyceraldehyde 3-phosphate from glycerone phosphate: step 1/1. The chain is Triosephosphate isomerase (TPI1) from Kluyveromyces marxianus (Yeast).